The sequence spans 100 residues: Large ribosomal subunit protein uL23 (100 aa).

This sequence belongs to the universal ribosomal protein uL23 family. As to quaternary structure, part of the 50S ribosomal subunit. Contacts protein L29, and trigger factor when it is bound to the ribosome.

In terms of biological role, one of the early assembly proteins it binds 23S rRNA. One of the proteins that surrounds the polypeptide exit tunnel on the outside of the ribosome. Forms the main docking site for trigger factor binding to the ribosome. This Lacticaseibacillus casei (strain BL23) (Lactobacillus casei) protein is Large ribosomal subunit protein uL23.